A 305-amino-acid polypeptide reads, in one-letter code: Cell division control protein 2 homolog C (305 aa).

The Protein kinase domain maps to 4–297 (YEKLEKVGEG…AKAALDHPYF (294 aa)). Residues 10–18 (VGEGTYGKV) and lysine 33 contribute to the ATP site. Threonine 14 is subject to Phosphothreonine. Tyrosine 15 is modified (phosphotyrosine). Aspartate 138 serves as the catalytic Proton acceptor. Threonine 172 carries the phosphothreonine; by CAK modification.

Belongs to the protein kinase superfamily. CMGC Ser/Thr protein kinase family. CDC2/CDKX subfamily.

The catalysed reaction is L-seryl-[protein] + ATP = O-phospho-L-seryl-[protein] + ADP + H(+). The enzyme catalyses L-threonyl-[protein] + ATP = O-phospho-L-threonyl-[protein] + ADP + H(+). It carries out the reaction [DNA-directed RNA polymerase] + ATP = phospho-[DNA-directed RNA polymerase] + ADP + H(+). Its function is as follows. Plays a key role in the control of the eukaryotic cell cycle. The chain is Cell division control protein 2 homolog C (CDC2C) from Antirrhinum majus (Garden snapdragon).